We begin with the raw amino-acid sequence, 129 residues long: Small ribosomal subunit protein uS11 (129 aa).

The protein belongs to the universal ribosomal protein uS11 family. As to quaternary structure, part of the 30S ribosomal subunit. Interacts with proteins S7 and S18. Binds to IF-3.

Located on the platform of the 30S subunit, it bridges several disparate RNA helices of the 16S rRNA. Forms part of the Shine-Dalgarno cleft in the 70S ribosome. The chain is Small ribosomal subunit protein uS11 from Limosilactobacillus fermentum (strain NBRC 3956 / LMG 18251) (Lactobacillus fermentum).